The primary structure comprises 40 residues: uncharacterized protein (40 aa).

The helical transmembrane segment at 20–37 threads the bilayer; sequence TYLYWTAVTAAYLTYLTI.

It localises to the membrane. This is an uncharacterized protein from Archaeoglobus fulgidus (strain ATCC 49558 / DSM 4304 / JCM 9628 / NBRC 100126 / VC-16).